Here is a 182-residue protein sequence, read N- to C-terminus: Proline-rich protein, Y-linked (182 aa).

2 disordered regions span residues 1–22 (MMRR…KPRD) and 89–108 (VPAD…PPPG). Positions 91 to 108 (ADPPPASPYRTSPRPPPG) are enriched in pro residues. In terms of domain architecture, DUF1725 spans 154–167 (WMKLETIILSKLSQ).

This is Proline-rich protein, Y-linked (PRORY) from Homo sapiens (Human).